The following is a 688-amino-acid chain: MARQFSLEKTRNIGIIAHIDAGKTTTTERILFHTGKIHKIGETHDGASQMDWMEQEQERGITITSAATTAFWKDHRINIIDTPGHVDFTVEVSRSLRVLDGAVTVIDAQAGVEPQTETVWRQASEYKVPRVIFVNKMDKVGADFAYAIETLKQRLGVHASAIQWPIGSENDFNGIIDLVEMNAFEYDNTSPETGKVVPIPSDLESITQTKRNELIETLSTLDEELMMYYLEEKPISSEMLKNSIRKATLQASFFPVLCGSSFKNKGVVKMLDAIVDYLPAPCDVAAIVGFDSDNQEIVRTGLDEEPFIALAFKVMTDPYVGKLTFFRIYSGSVKAGSYVTNTTKGTKERFGRLLQMHANSREEVKEAYTGDILAVVGLKATTTGDTLASEGQTIVLESMNFPEPVIEIAVEPKTKADQDKMGIALAKLAEEDPTFKVFSNHETGQTIIAGMGELHLDIIIERLKREFKVQANVTEPQVAYRETITQETETEGKFIRQSGGRGQYGHVWMRFEPNPGKGFEFVNKIVGGVVPREYVPAVQKGIQEALAGGILAGYQIIDVKATLFDGSYHDVDSSEMAFKIAASMALKETKTKGNPVILEPIMDVEVVTPNDYVGNVIGDLTSRRGRLENQESRANAVAIRAFVPLSEMFGYATVLRSNTQGRATFIMQFAKYEKAPKSITEEIIKKRA.

Residues 8-282 form the tr-type G domain; it reads EKTRNIGIIA…AIVDYLPAPC (275 aa). GTP contacts are provided by residues 17-24, 81-85, and 135-138; these read AHIDAGKT, DTPGH, and NKMD.

It belongs to the TRAFAC class translation factor GTPase superfamily. Classic translation factor GTPase family. EF-G/EF-2 subfamily.

It is found in the cytoplasm. Functionally, catalyzes the GTP-dependent ribosomal translocation step during translation elongation. During this step, the ribosome changes from the pre-translocational (PRE) to the post-translocational (POST) state as the newly formed A-site-bound peptidyl-tRNA and P-site-bound deacylated tRNA move to the P and E sites, respectively. Catalyzes the coordinated movement of the two tRNA molecules, the mRNA and conformational changes in the ribosome. The protein is Elongation factor G of Onion yellows phytoplasma (strain OY-M).